Consider the following 398-residue polypeptide: Phosphoglycerate kinase (398 aa).

Substrate-binding positions include 20-22 (DFN), Arg-35, 58-61 (HLGK), Arg-118, and Arg-155. ATP is bound by residues Lys-208, Gly-296, Glu-327, and 354 to 357 (GGDS).

Belongs to the phosphoglycerate kinase family. Monomer.

The protein resides in the cytoplasm. The enzyme catalyses (2R)-3-phosphoglycerate + ATP = (2R)-3-phospho-glyceroyl phosphate + ADP. It participates in carbohydrate degradation; glycolysis; pyruvate from D-glyceraldehyde 3-phosphate: step 2/5. The chain is Phosphoglycerate kinase from Fusobacterium nucleatum subsp. nucleatum (strain ATCC 25586 / DSM 15643 / BCRC 10681 / CIP 101130 / JCM 8532 / KCTC 2640 / LMG 13131 / VPI 4355).